We begin with the raw amino-acid sequence, 1450 residues long: Auxilin-like protein 1 (1450 aa).

Disordered stretches follow at residues 117–142 (NEDK…GKKS), 241–318 (STRD…AESS), 357–383 (DSKI…SQIL), 459–480 (NSKQ…TKQE), 512–541 (SQKD…SQEM), 556–575 (EETP…EKSE), 908–946 (DRSE…RSSF), 961–1046 (EQHR…ELEH), 1077–1168 (GAAT…ERKQ), 1192–1241 (AGKT…AERA), and 1254–1328 (AMEK…SDRA). A coiled-coil region spans residues 316–344 (ESSAALKKAIEEAQIRMNIAKQMMEKKKS). Residues 357-366 (DSKIENKGNT) are compositionally biased toward basic and acidic residues. Basic and acidic residues-rich tracts occupy residues 512–524 (SQKD…EKEN), 564–575 (SKSEMNIEEKSE), 908–923 (DRSE…RFDQ), 1037–1046 (RNGDKKELEH), 1117–1131 (NMKE…RSSM), 1147–1168 (ETVE…ERKQ), and 1192–1226 (AGKT…KLSS). Coiled coils occupy residues 1142–1184 (SQNK…RERA) and 1219–1257 (EVND…AMEK). Low complexity predominate over residues 1270–1299 (SYGGSKSFSSSGERRGSSSSGTENKSSGPS). A compositionally biased stretch (basic and acidic residues) spans 1310–1328 (PIQRCKARSERHQRTSDRA). Residues 1327-1355 (RAAEALAEKKLRDLKTQKEQTERNRLAEA) adopt a coiled-coil conformation. Residues 1377–1450 (TLQYILGAES…AWNKFGADER (74 aa)) enclose the J domain.

The sequence is that of Auxilin-like protein 1 (AUL1) from Arabidopsis thaliana (Mouse-ear cress).